Consider the following 205-residue polypeptide: Adenylyl-sulfate kinase (205 aa).

31 to 38 (GLSGAGKS) contributes to the ATP binding site. Catalysis depends on serine 105, which acts as the Phosphoserine intermediate.

This sequence belongs to the APS kinase family.

It catalyses the reaction adenosine 5'-phosphosulfate + ATP = 3'-phosphoadenylyl sulfate + ADP + H(+). It participates in sulfur metabolism; hydrogen sulfide biosynthesis; sulfite from sulfate: step 2/3. In terms of biological role, catalyzes the synthesis of activated sulfate. This chain is Adenylyl-sulfate kinase, found in Shewanella denitrificans (strain OS217 / ATCC BAA-1090 / DSM 15013).